We begin with the raw amino-acid sequence, 282 residues long: Tetraspanin-6 (282 aa).

Topologically, residues 1-7 are cytoplasmic; it reads MYRFSNT. Residues 8 to 28 traverse the membrane as a helical segment; it reads VIGVLNLLTLLASIPIIGTAL. The Extracellular portion of the chain corresponds to 29–44; the sequence is YKARSSTTCENFLQTP. A helical membrane pass occupies residues 45 to 65; the sequence is LLVIGFIILIVSLAGFIGACF. At 66 to 74 the chain is on the cytoplasmic side; it reads NVAWALWVY. A helical transmembrane segment spans residues 75-95; sequence LVVMIFLIATLMGLTLFGLVV. Topologically, residues 96-220 are extracellular; that stretch reads TSQGGGVEVP…EIRLDWRKLS (125 aa). A helical transmembrane segment spans residues 221–241; sequence VVNILVLVLLIAVYAAGCCAF. Topologically, residues 242–282 are cytoplasmic; sequence HNTRHAAHPYHPSDDNRMTRVRPRWDYYWWRWWHEKKEQLY.

This sequence belongs to the tetraspanin (TM4SF) family.

It localises to the membrane. May be involved in the regulation of cell differentiation. The chain is Tetraspanin-6 (TET6) from Arabidopsis thaliana (Mouse-ear cress).